The primary structure comprises 95 residues: Class I hydrophobin 13 (95 aa).

Disulfide bonds link Cys-14–Cys-74, Cys-21–Cys-68, Cys-22–Cys-55, and Cys-75–Cys-88. N-linked (GlcNAc...) asparagine glycosylation is found at Asn-23 and Asn-77.

It belongs to the fungal hydrophobin family. Self-assembles to form functional amyloid fibrils called rodlets. Self-assembly into fibrillar rodlets occurs spontaneously at hydrophobic:hydrophilic interfaces and the rodlets further associate laterally to form amphipathic monolayers.

The protein localises to the secreted. It is found in the cell wall. Functionally, aerial growth, conidiation, and dispersal of filamentous fungi in the environment rely upon a capability of their secreting small amphipathic proteins called hydrophobins (HPBs) with low sequence identity. Class I can self-assemble into an outermost layer of rodlet bundles on aerial cell surfaces, conferring cellular hydrophobicity that supports fungal growth, development and dispersal; whereas Class II form highly ordered films at water-air interfaces through intermolecular interactions but contribute nothing to the rodlet structure. In Pleurotus ostreatus (strain PC15) (Oyster mushroom), this protein is Class I hydrophobin 13.